A 564-amino-acid polypeptide reads, in one-letter code: Pyranose 2-oxidase (564 aa).

Positions 1–25 are excised as a propeptide; the sequence is MPIRLSKEKINDLLQRSQGDLTSSQ. His-158 is modified (tele-8alpha-FAD histidine). 2 residues coordinate substrate: Gln-392 and His-394. His-498 acts as the Proton acceptor in catalysis. The active site involves Asn-541.

Belongs to the GMC oxidoreductase family. In terms of assembly, homotetramer. Requires FAD as cofactor.

It catalyses the reaction D-glucose + O2 = 2-dehydro-D-glucose + H2O2. Catalyzes the oxidation of various aldopyranoses and disaccharides on carbon-2 to the corresponding 2-keto sugars concomitant with the reduction of O(2) to H(2)O(2). The preferred substrate is D-glucose which is converted to 2-dehydro-D-glucose. Acts also on D-xylose, L-sorbose, D-galactose and 1,5-anhydroglucitol, a diagnostic marker of diabetes mellitus. The polypeptide is Pyranose 2-oxidase (p2ox) (Tricholoma matsutake (Matsutake mushroom)).